The sequence spans 266 residues: Ribonuclease 3 (266 aa).

Residues 1–35 (MMDESADIKPVPTSEDVAAPSGTEPVAPAPKKKRA) form a disordered region. The RNase III domain maps to 43–171 (MAAIEQRLGH…VIGAVYLDGG (129 aa)). Mg(2+) is bound at residue Glu-84. Asp-88 is a catalytic residue. Mg(2+)-binding residues include Asp-157 and Glu-160. Glu-160 is a catalytic residue. The region spanning 196–265 (DPKTVLQEWA…ASAMIVREGV (70 aa)) is the DRBM domain.

Belongs to the ribonuclease III family. In terms of assembly, homodimer. The cofactor is Mg(2+).

Its subcellular location is the cytoplasm. The catalysed reaction is Endonucleolytic cleavage to 5'-phosphomonoester.. Digests double-stranded RNA. Involved in the processing of primary rRNA transcript to yield the immediate precursors to the large and small rRNAs (23S and 16S). Processes some mRNAs, and tRNAs when they are encoded in the rRNA operon. Processes pre-crRNA and tracrRNA of type II CRISPR loci if present in the organism. The protein is Ribonuclease 3 of Nitrobacter winogradskyi (strain ATCC 25391 / DSM 10237 / CIP 104748 / NCIMB 11846 / Nb-255).